The primary structure comprises 370 residues: Cobalt-precorrin-5B C(1)-methyltransferase (370 aa).

This sequence belongs to the CbiD family.

It catalyses the reaction Co-precorrin-5B + S-adenosyl-L-methionine = Co-precorrin-6A + S-adenosyl-L-homocysteine. The protein operates within cofactor biosynthesis; adenosylcobalamin biosynthesis; cob(II)yrinate a,c-diamide from sirohydrochlorin (anaerobic route): step 6/10. Functionally, catalyzes the methylation of C-1 in cobalt-precorrin-5B to form cobalt-precorrin-6A. The protein is Cobalt-precorrin-5B C(1)-methyltransferase of Nostoc sp. (strain PCC 7120 / SAG 25.82 / UTEX 2576).